The primary structure comprises 109 residues: Small ribosomal subunit protein bS6 (109 aa).

The protein belongs to the bacterial ribosomal protein bS6 family.

In terms of biological role, binds together with bS18 to 16S ribosomal RNA. This is Small ribosomal subunit protein bS6 from Anaplasma marginale (strain St. Maries).